Consider the following 457-residue polypeptide: Peptidyl-prolyl cis-trans isomerase FKBP5 (457 aa).

Met1 bears the N-acetylmethionine mark. The interval 1–26 (MTTDEGAKNSRGNPAATVAEQGEDVT) is disordered. Lys28 is subject to N6-acetyllysine. 2 PPIase FKBP-type domains span residues 50–138 (GDRV…LDFK) and 165–251 (GARV…KSFE). TPR repeat units follow at residues 268–301 (AAIV…LEME), 317–350 (LAAF…DSAN), and 351–384 (EKGL…NPQN). Residues 421–457 (AKEEANKAMSKKTSEGVTNEKLTASHAVEEEKPEGHV) form a disordered region. Ser445 is subject to Phosphoserine. A compositionally biased stretch (basic and acidic residues) spans 447–457 (AVEEEKPEGHV).

Part of a heteromultimeric cytoplasmic complex with HSP90AA1, HSPA1A/HSPA1B and steroid receptors. Upon ligand binding dissociates from the complex and FKBP4 takes its place. Interacts with functionally mature heterooligomeric progesterone receptor complexes along with HSP90 and TEBP. Interacts with NR3C1. Interacts with Akt/AKT1 and PHLPP1; enhancing dephosphorylation and subsequent activation of Akt/AKT1. Interacts with IFI44L; this interaction modulates the kinase activity of IKBKB and IKBKE. Interacts with IKBKB and IKBKE. Acetylation impairs ability to promote interaction between Akt/AKT1 and PHLPP1. Deacetylation by SIRT7 promotes interaction between Akt/AKT1 and PHLPP1, leading to suppress Akt/AKT1 activation. Post-translationally, ubiquitinated, leading to degradation in a proteasome-dependent manner. Deubiquitinated by USP49, leading to stabilization.

It is found in the cytoplasm. The protein resides in the nucleus. It carries out the reaction [protein]-peptidylproline (omega=180) = [protein]-peptidylproline (omega=0). Inhibited by both FK506 and rapamycin. Immunophilin protein with PPIase and co-chaperone activities. Component of unligated steroid receptors heterocomplexes through interaction with heat-shock protein 90 (HSP90). Plays a role in the intracellular trafficking of heterooligomeric forms of steroid hormone receptors maintaining the complex into the cytoplasm when unliganded. Acts as a regulator of Akt/AKT1 activity by promoting the interaction between Akt/AKT1 and PHLPP1, thereby enhancing dephosphorylation and subsequent activation of Akt/AKT1. Interacts with IKBKE and IKBKB which facilitates IKK complex assembly leading to increased IKBKE and IKBKB kinase activity, NF-kappaB activation, and IFN production. This Saimiri boliviensis boliviensis (Bolivian squirrel monkey) protein is Peptidyl-prolyl cis-trans isomerase FKBP5 (FKBP5).